The primary structure comprises 490 residues: MGARCSKFSFCLFPSHFKSASVLESPDIENGGKVWPTFKEFKLEQLKSATGGFSSDNIVSEHGEKAPNVVYRGRLDDGRLIAVKRFNRLAWADHRQFLDEAKAVGSLRSDRLANLIGCCFEGEERLLVAEFMPHETLAKHLFHWENNPMKWAMRLRVALCLAQALEYCSNKGRALYHDLNAYRVLFDKDGNPRLSCFGLMKNSRDGKSYSTNLAFTPPEYLRTGRVTPESVVFSFGTVLLDLMSGKHIPPSHALDLIRGKNCAMLMDSALEGHFSNEDGTELVRLATRCLQYEARERPNVKSLVTSLVTLQKESDVASYVLMGIPHETEAEEESPLSLTPFGDACLRVDLTAIQEILSKIGYKDDEGIANELSFQMWTNQMQESLNSKKQGDLAFRSKDFTTAVDCYTQFIDGGTMVSPTVHARRCLSYLMNDNAQEALTDALQAQVVSPDWPTALYLQAACLFKLGMEADAQQALKDGTTLEAKKSNKR.

Gly2 carries the N-myristoyl glycine lipid modification. Position 25 is a phosphoserine (Ser25). Residues 56–310 (DNIVSEHGEK…KSLVTSLVTL (255 aa)) form the Protein kinase domain. ATP contacts are provided by residues 62 to 70 (HGEKAPNVV) and Lys84. Catalysis depends on Asp178, which acts as the Proton acceptor. A Phosphoserine modification is found at Ser373.

This sequence belongs to the protein kinase superfamily. Ser/Thr protein kinase family. As to quaternary structure, interacts with BRI1, ASK7/BIN2, ASK9/BIL2, BSK1, BSK5, BSK8 and BSK11. Post-translationally, phosphorylated by BRI1, ASK7/BIN2 and ASK9/BIL2.

Its subcellular location is the cell membrane. It catalyses the reaction L-seryl-[protein] + ATP = O-phospho-L-seryl-[protein] + ADP + H(+). The catalysed reaction is L-threonyl-[protein] + ATP = O-phospho-L-threonyl-[protein] + ADP + H(+). Functionally, probable serine/threonine kinase that acts as a positive regulator of brassinosteroid (BR) signaling downstream of the receptor kinase BRI1. Functions redundantly with BSK3, BSK4, BSK7 and BSK8. The sequence is that of Serine/threonine-protein kinase BSK6 from Arabidopsis thaliana (Mouse-ear cress).